A 260-amino-acid chain; its full sequence is 5'-nucleotidase SurE (260 aa).

A divalent metal cation is bound by residues D10, D11, S41, and N95.

Belongs to the SurE nucleotidase family. A divalent metal cation serves as cofactor.

The protein localises to the cytoplasm. It catalyses the reaction a ribonucleoside 5'-phosphate + H2O = a ribonucleoside + phosphate. Its function is as follows. Nucleotidase that shows phosphatase activity on nucleoside 5'-monophosphates. In Methanoregula boonei (strain DSM 21154 / JCM 14090 / 6A8), this protein is 5'-nucleotidase SurE.